We begin with the raw amino-acid sequence, 787 residues long: Endonuclease MutS2 (787 aa).

329-336 (GPNTGGKT) is a binding site for ATP. The 76-residue stretch at 712–787 (INLLGCTVDE…DAGVTIVDFK (76 aa)) folds into the Smr domain.

Belongs to the DNA mismatch repair MutS family. MutS2 subfamily. As to quaternary structure, homodimer. Binds to stalled ribosomes, contacting rRNA.

Endonuclease that is involved in the suppression of homologous recombination and thus may have a key role in the control of bacterial genetic diversity. Its function is as follows. Acts as a ribosome collision sensor, splitting the ribosome into its 2 subunits. Detects stalled/collided 70S ribosomes which it binds and splits by an ATP-hydrolysis driven conformational change. Acts upstream of the ribosome quality control system (RQC), a ribosome-associated complex that mediates the extraction of incompletely synthesized nascent chains from stalled ribosomes and their subsequent degradation. Probably generates substrates for RQC. In Lachnospira eligens (strain ATCC 27750 / DSM 3376 / VPI C15-48 / C15-B4) (Eubacterium eligens), this protein is Endonuclease MutS2.